Consider the following 217-residue polypeptide: Small ribosomal subunit protein uS3c (217 aa).

The region spanning 47 to 119 (VRTHIKSSSN…KLHIAIEKVA (73 aa)) is the KH type-2 domain.

It belongs to the universal ribosomal protein uS3 family. Part of the 30S ribosomal subunit.

It is found in the plastid. The protein localises to the chloroplast. This Pinus koraiensis (Korean pine) protein is Small ribosomal subunit protein uS3c (rps3).